The following is a 334-amino-acid chain: Tryptophan--tRNA ligase (334 aa).

ATP is bound by residues Gln-11 to Ser-13 and Gly-19 to Asn-20. Residues Pro-12–Asn-20 carry the 'HIGH' region motif. Residue Asp-135 coordinates L-tryptophan. Residues Gly-147 to Asp-149, Val-186, and Lys-195 to Ser-199 each bind ATP. A 'KMSKS' region motif is present at residues Lys-195–Ser-199.

It belongs to the class-I aminoacyl-tRNA synthetase family. In terms of assembly, homodimer.

Its subcellular location is the cytoplasm. It catalyses the reaction tRNA(Trp) + L-tryptophan + ATP = L-tryptophyl-tRNA(Trp) + AMP + diphosphate + H(+). Catalyzes the attachment of tryptophan to tRNA(Trp). This is Tryptophan--tRNA ligase from Escherichia coli O157:H7.